The chain runs to 1189 residues: Phosphatidylinositol 3,4,5-trisphosphate 5-phosphatase 1 (1189 aa).

One can recognise an SH2 domain in the interval Trp-5–Val-101. Over residues Leu-103 to Val-117 the composition is skewed to acidic residues. The tract at residues Leu-103–Pro-132 is disordered. An SH3-binding 1 motif is present at residues Pro-124 to Arg-129. Phosphoserine is present on Ser-243. The disordered stretch occupies residues Thr-870–Ser-906. The NPXY motif 1 signature appears at Asn-912–Tyr-915. Tyr-915 carries the post-translational modification Phosphotyrosine. The disordered stretch occupies residues Gly-922–Gln-1189. The segment covering Gln-931–Ser-943 has biased composition (polar residues). Ser-934 carries the phosphoserine modification. A Phosphotyrosine modification is found at Tyr-944. Phosphoserine is present on Ser-960. Residues Pro-961–Ser-971 are compositionally biased toward pro residues. Thr-963 is subject to Phosphothreonine. Residues Pro-969–Lys-974 carry the SH3-binding 2 motif. Ser-971 is subject to Phosphoserine. The tract at residues Met-1016 to Lys-1030 is interaction with DAB2. The short motif at Asn-1019–Tyr-1022 is the NPXY motif 2 element. Tyr-1022 carries the phosphotyrosine modification. The span at Pro-1033 to Pro-1047 shows a compositional bias: basic and acidic residues. Residues Pro-1040–Pro-1051 carry the SH3-binding 3 motif. Residues Pro-1134 to Val-1145 are compositionally biased toward pro residues. A compositionally biased stretch (basic and acidic residues) spans Lys-1157–Glu-1177.

Belongs to the inositol 1,4,5-trisphosphate 5-phosphatase family. As to quaternary structure, interacts with tyrosine phosphorylated form of SHC1. Interacts with tyrosine phosphorylated form of DOK1. Interacts with tyrosine phosphorylated form of DOK3. Interacts with tyrosine phosphorylated form of SLAMF1/CD150. Interacts with PTPN11 in response to IL-3. Interacts with receptor EPOR. Interacts with receptors MS4A2/FCER1B and FCER1G. Interacts with receptors FCGR2B and FCGR3. Interacts with receptor FCGR2A, leading to regulate gene expression during the phagocytic process. Interacts with GRB2. Interacts with PLCG1. Interacts with tyrosine kinases SRC and TEC. Interacts with c-Met/MET. Interacts with MILR1 (tyrosine-phosphorylated). Can weakly interact (via NPXY motif 2) with DAB2 (via PID domain); the interaction is impaired by tyrosine phosphorylation of the NPXY motif. Interacts with FCRL3 and FCRL6 (tyrosine phosphorylated form). Interacts (via SH2 domain) with tyrosine phosphorylated KLRC1 (via ITIM). Interacts with MPL/TPOR. Post-translationally, tyrosine phosphorylated by the members of the SRC family after exposure to a diverse array of extracellular stimuli such as cytokines, growth factors, antibodies, chemokines, integrin ligands and hypertonic and oxidative stress. Phosphorylated upon IgG receptor FCGR2B-binding. As to expression, specifically expressed in immune and hematopoietic cells. Expressed in bone marrow and blood cells. Levels vary considerably within this compartment. Present in at least 74% of immature CD34+ cells, whereas within the more mature population of CD33+ cells, it is present in only 10% of cells. Present in the majority of T-cells, while it is present in a minority of B-cells (at protein level).

Its subcellular location is the cytoplasm. The protein localises to the cell membrane. The protein resides in the membrane raft. It is found in the cytoskeleton. It localises to the membrane. The enzyme catalyses a 1,2-diacyl-sn-glycero-3-phospho-(1D-myo-inositol-3,4,5-trisphosphate) + H2O = a 1,2-diacyl-sn-glycero-3-phospho-(1D-myo-inositol-3,4-bisphosphate) + phosphate. It catalyses the reaction 1D-myo-inositol 1,3,4,5-tetrakisphosphate + H2O = 1D-myo-inositol 1,3,4-trisphosphate + phosphate. The catalysed reaction is a 1,2-diacyl-sn-glycero-3-phospho-(1D-myo-inositol-4,5-bisphosphate) + H2O = a 1,2-diacyl-sn-glycero-3-phospho-(1D-myo-inositol 4-phosphate) + phosphate. Activated upon translocation to the sites of synthesis of PtdIns(3,4,5)P3 in the membrane. Functionally, phosphatidylinositol (PtdIns) phosphatase that specifically hydrolyzes the 5-phosphate of phosphatidylinositol-3,4,5-trisphosphate (PtdIns(3,4,5)P3) to produce PtdIns(3,4)P2, thereby negatively regulating the PI3K (phosphoinositide 3-kinase) pathways. Able also to hydrolyzes the 5-phosphate of phosphatidylinositol-4,5-bisphosphate (PtdIns(4,5)P3) and inositol 1,3,4,5-tetrakisphosphate. Acts as a negative regulator of B-cell antigen receptor signaling. Mediates signaling from the FC-gamma-RIIB receptor (FCGR2B), playing a central role in terminating signal transduction from activating immune/hematopoietic cell receptor systems. Acts as a negative regulator of myeloid cell proliferation/survival and chemotaxis, mast cell degranulation, immune cells homeostasis, integrin alpha-IIb/beta-3 signaling in platelets and JNK signaling in B-cells. Regulates proliferation of osteoclast precursors, macrophage programming, phagocytosis and activation and is required for endotoxin tolerance. Involved in the control of cell-cell junctions, CD32a signaling in neutrophils and modulation of EGF-induced phospholipase C activity. Key regulator of neutrophil migration, by governing the formation of the leading edge and polarization required for chemotaxis. Modulates FCGR3/CD16-mediated cytotoxicity in NK cells. Mediates the activin/TGF-beta-induced apoptosis through its Smad-dependent expression. This Homo sapiens (Human) protein is Phosphatidylinositol 3,4,5-trisphosphate 5-phosphatase 1 (INPP5D).